The chain runs to 156 residues: Arginine repressor (156 aa).

Belongs to the ArgR family.

The protein resides in the cytoplasm. Its pathway is amino-acid biosynthesis; L-arginine biosynthesis [regulation]. Its function is as follows. Regulates arginine biosynthesis genes. The chain is Arginine repressor from Pectobacterium atrosepticum (strain SCRI 1043 / ATCC BAA-672) (Erwinia carotovora subsp. atroseptica).